The chain runs to 571 residues: Glutamate--tRNA ligase (571 aa).

The 'HIGH' region motif lies at Pro-106–Asn-116.

It belongs to the class-I aminoacyl-tRNA synthetase family. Glutamate--tRNA ligase type 2 subfamily.

It localises to the cytoplasm. The catalysed reaction is tRNA(Glu) + L-glutamate + ATP = L-glutamyl-tRNA(Glu) + AMP + diphosphate. In terms of biological role, catalyzes the attachment of glutamate to tRNA(Glu) in a two-step reaction: glutamate is first activated by ATP to form Glu-AMP and then transferred to the acceptor end of tRNA(Glu). This is Glutamate--tRNA ligase from Pyrococcus abyssi (strain GE5 / Orsay).